A 350-amino-acid chain; its full sequence is Hydroxymethylglutaryl-CoA synthase (350 aa).

E83 functions as the Proton donor/acceptor in the catalytic mechanism. The Acyl-thioester intermediate role is filled by C115. C115 and T156 together coordinate (3S)-3-hydroxy-3-methylglutaryl-CoA. R204 contacts CoA. (3S)-3-hydroxy-3-methylglutaryl-CoA is bound by residues T206 and H239. H239 acts as the Proton donor/acceptor in catalysis. K244 contacts CoA. Residues N271 and S301 each coordinate (3S)-3-hydroxy-3-methylglutaryl-CoA.

The protein belongs to the thiolase-like superfamily. Archaeal HMG-CoA synthase family. In terms of assembly, interacts with acetoacetyl-CoA thiolase that catalyzes the precedent step in the pathway and with a DUF35 protein. The acetoacetyl-CoA thiolase/HMG-CoA synthase complex channels the intermediate via a fused CoA-binding site, which allows for efficient coupling of the endergonic thiolase reaction with the exergonic HMGCS reaction.

The catalysed reaction is acetoacetyl-CoA + acetyl-CoA + H2O = (3S)-3-hydroxy-3-methylglutaryl-CoA + CoA + H(+). Its pathway is metabolic intermediate biosynthesis; (R)-mevalonate biosynthesis; (R)-mevalonate from acetyl-CoA: step 2/3. Catalyzes the condensation of acetyl-CoA with acetoacetyl-CoA to form 3-hydroxy-3-methylglutaryl-CoA (HMG-CoA). Functions in the mevalonate (MVA) pathway leading to isopentenyl diphosphate (IPP), a key precursor for the biosynthesis of isoprenoid compounds that are building blocks of archaeal membrane lipids. The protein is Hydroxymethylglutaryl-CoA synthase of Thermococcus kodakarensis (strain ATCC BAA-918 / JCM 12380 / KOD1) (Pyrococcus kodakaraensis (strain KOD1)).